The following is a 207-amino-acid chain: LexA repressor (207 aa).

The segment at residues 28 to 48 is a DNA-binding region (H-T-H motif); sequence RAEIARHLGFKSANAAEEHLK. Residues Ser124 and Lys161 each act as for autocatalytic cleavage activity in the active site.

This sequence belongs to the peptidase S24 family. Homodimer.

The catalysed reaction is Hydrolysis of Ala-|-Gly bond in repressor LexA.. Represses a number of genes involved in the response to DNA damage (SOS response), including recA and lexA. In the presence of single-stranded DNA, RecA interacts with LexA causing an autocatalytic cleavage which disrupts the DNA-binding part of LexA, leading to derepression of the SOS regulon and eventually DNA repair. This Pseudoalteromonas atlantica (strain T6c / ATCC BAA-1087) protein is LexA repressor.